The sequence spans 73 residues: Homeodomain-only protein (73 aa).

The segment at residues 3 to 62 is a DNA-binding region (homeobox; degenerate); the sequence is TETASGPTEDQVEILEYNFNKVNKHPDPTTLCLIAAEAGLSEEETQKWFKQRLAQWRRSE.

In terms of assembly, interacts with serum response factor (SRF). Component of a large complex containing histone deacetylases such as HDAC2. Interacts with the acetylated forms of HSPA1A and HSPA1B. Interacts with HSPA8.

It is found in the nucleus. The protein localises to the cytoplasm. In terms of biological role, atypical homeodomain protein which does not bind DNA and is required to modulate cardiac growth and development. Acts via its interaction with SRF, thereby modulating the expression of SRF-dependent cardiac-specific genes and cardiac development. Prevents SRF-dependent transcription either by inhibiting SRF binding to DNA or by recruiting histone deacetylase (HDAC) proteins that prevent transcription by SRF. Overexpression causes cardiac hypertrophy. Acts as a co-chaperone for HSPA1A and HSPA1B chaperone proteins and assists in chaperone-mediated protein refolding. This is Homeodomain-only protein (HOPX) from Bos taurus (Bovine).